Consider the following 120-residue polypeptide: NAD(P)H-quinone oxidoreductase subunit 3 (120 aa).

3 helical membrane-spanning segments follow: residues 10–30, 64–84, and 89–109; these read LLVF…ASAL, MFAL…PWAV, and LGLL…VGLV.

It belongs to the complex I subunit 3 family. As to quaternary structure, NDH-1 can be composed of about 15 different subunits; different subcomplexes with different compositions have been identified which probably have different functions.

It localises to the cellular thylakoid membrane. It carries out the reaction a plastoquinone + NADH + (n+1) H(+)(in) = a plastoquinol + NAD(+) + n H(+)(out). The catalysed reaction is a plastoquinone + NADPH + (n+1) H(+)(in) = a plastoquinol + NADP(+) + n H(+)(out). In terms of biological role, NDH-1 shuttles electrons from an unknown electron donor, via FMN and iron-sulfur (Fe-S) centers, to quinones in the respiratory and/or the photosynthetic chain. The immediate electron acceptor for the enzyme in this species is believed to be plastoquinone. Couples the redox reaction to proton translocation, and thus conserves the redox energy in a proton gradient. Cyanobacterial NDH-1 also plays a role in inorganic carbon-concentration. The protein is NAD(P)H-quinone oxidoreductase subunit 3 of Synechococcus sp. (strain JA-3-3Ab) (Cyanobacteria bacterium Yellowstone A-Prime).